The sequence spans 363 residues: Membrane-bound lytic murein transglycosylase C (363 aa).

The signal sequence occupies residues 1 to 15 (MKKYIVFAIIPFLFA). Cysteine 16 carries N-palmitoyl cysteine lipidation. Cysteine 16 carries the S-diacylglycerol cysteine lipid modification.

Belongs to the transglycosylase Slt family.

Its subcellular location is the cell outer membrane. The catalysed reaction is Exolytic cleavage of the (1-&gt;4)-beta-glycosidic linkage between N-acetylmuramic acid (MurNAc) and N-acetylglucosamine (GlcNAc) residues in peptidoglycan, from either the reducing or the non-reducing ends of the peptidoglycan chains, with concomitant formation of a 1,6-anhydrobond in the MurNAc residue.. Its function is as follows. Murein-degrading enzyme. May play a role in recycling of muropeptides during cell elongation and/or cell division. This chain is Membrane-bound lytic murein transglycosylase C, found in Histophilus somni (strain 129Pt) (Haemophilus somnus).